A 352-amino-acid polypeptide reads, in one-letter code: N-lysine methyltransferase KMT5A (352 aa).

The segment at 21 to 51 (AVAATAPGPEMVERRGPGRPRTNGENVFTGQ) is disordered. Serine 59 carries the phosphoserine modification. The disordered stretch occupies residues 87 to 202 (PLAGIYRKRD…KSKAELQSEE (116 aa)). Over residues 109–121 (MKAEEQKIKDARR) the composition is skewed to basic and acidic residues. Position 140 is a phosphothreonine (threonine 140). Residues 156 to 172 (GLKKPVRGKQAPRKKAQ) show a composition bias toward basic residues. The SET domain occupies 216–337 (EGMKIDLIDG…AGEELLYDYG (122 aa)). S-adenosyl-L-methionine is bound by residues 226–228 (KGR), tyrosine 271, and 298–299 (NH).

It belongs to the class V-like SAM-binding methyltransferase superfamily. Histone-lysine methyltransferase family. PR/SET subfamily. As to quaternary structure, interacts with L3MBTL1. Interacts with SIRT2 (phosphorylated form); the interaction is direct, stimulates KMT5A-mediated methyltransferase activity at histone H4 'Lys-20' (H4K20me1) and is increased in a H(2)O(2)-induced oxidative stress-dependent manner. Post-translationally, ubiquitinated and degraded by the DCX(DTL) complex.

The protein resides in the nucleus. Its subcellular location is the chromosome. The catalysed reaction is L-lysyl(20)-[histone H4] + S-adenosyl-L-methionine = N(6)-methyl-L-lysyl(20)-[histone H4] + S-adenosyl-L-homocysteine + H(+). It carries out the reaction L-lysyl-[protein] + S-adenosyl-L-methionine = N(6)-methyl-L-lysyl-[protein] + S-adenosyl-L-homocysteine + H(+). In terms of biological role, protein-lysine N-methyltransferase that monomethylates both histones and non-histone proteins. Specifically monomethylates 'Lys-20' of histone H4 (H4K20me1). H4K20me1 is enriched during mitosis and represents a specific tag for epigenetic transcriptional repression. Mainly functions in euchromatin regions, thereby playing a central role in the silencing of euchromatic genes. Required for cell proliferation, probably by contributing to the maintenance of proper higher-order structure of DNA during mitosis. Involved in chromosome condensation and proper cytokinesis. Nucleosomes are preferred as substrate compared to free histones. Mediates monomethylation of p53/TP53 at 'Lys-382', leading to repress p53/TP53-target genes. Plays a negative role in TGF-beta response regulation and a positive role in cell migration. This chain is N-lysine methyltransferase KMT5A, found in Bos taurus (Bovine).